The primary structure comprises 446 residues: Trigger factor (446 aa).

The PPIase FKBP-type domain maps to 163–248 (GDRLVIDFEG…VKEIKKKNLL (86 aa)).

Belongs to the FKBP-type PPIase family. Tig subfamily.

Its subcellular location is the cytoplasm. It carries out the reaction [protein]-peptidylproline (omega=180) = [protein]-peptidylproline (omega=0). Functionally, involved in protein export. Acts as a chaperone by maintaining the newly synthesized protein in an open conformation. Functions as a peptidyl-prolyl cis-trans isomerase. The protein is Trigger factor of Natranaerobius thermophilus (strain ATCC BAA-1301 / DSM 18059 / JW/NM-WN-LF).